The sequence spans 910 residues: ZZ-type zinc finger-containing protein 3 (910 aa).

2 disordered regions span residues 41–117 (AHPE…RQAE) and 133–153 (EATNSSEEDSPVKPDKEPGEH). A compositionally biased stretch (polar residues) spans 67–84 (QKGTNNGRTSDVRQQSAR). A phosphoserine mark is found at Ser-89, Ser-96, Ser-137, Ser-138, and Ser-142. A compositionally biased stretch (basic and acidic residues) spans 96–116 (SSSEKDDLERQALESCERRQA). The segment covering 142-153 (SPVKPDKEPGEH) has biased composition (basic and acidic residues). Residue Lys-283 forms a Glycyl lysine isopeptide (Lys-Gly) (interchain with G-Cter in SUMO2) linkage. Disordered stretches follow at residues 303 to 358 (TAES…VSGE), 373 to 444 (TSLS…PQDG), and 609 to 641 (ARPKSPLDPKKDGESLSYSMLPLSDGPEGSHNR). Composition is skewed to polar residues over residues 331–347 (SSASKEQCNENSSNPLD) and 397–434 (SSPTKTTSPYRENGQLEETNLSPQETNTTVSDHVSESP). Lys-401 bears the N6-acetyllysine mark. Phosphoserine is present on Ser-613. Basic and acidic residues predominate over residues 613 to 622 (SPLDPKKDGE). Lys-654 participates in a covalent cross-link: Glycyl lysine isopeptide (Lys-Gly) (interchain with G-Cter in SUMO2). One can recognise an HTH myb-type domain in the interval 654-714 (KPETFNQLWT…RVQKYFIKLT (61 aa)). A DNA-binding region (H-T-H motif) is located at residues 687–710 (WQKIADELGNRTAKQVASRVQKYF). Lys-708 carries the N6-acetyllysine modification. Lys-715 is covalently cross-linked (Glycyl lysine isopeptide (Lys-Gly) (interchain with G-Cter in SUMO2)). The ZZ-type zinc-finger motif lies at 825–884 (HVGFKCDNCGVEPIQGVRWHCQDCPPEMSLDFCDSCSDCPHETDIHKEDHQLEPVYKSET). The Zn(2+) site is built by Cys-830, Cys-833, Cys-845, Cys-848, Cys-857, Cys-860, His-870, and His-874.

As to quaternary structure, component of the ADA2A-containing complex (ATAC), composed of KAT14, KAT2A, TADA2L, TADA3L, ZZ3, MBIP, WDR5, YEATS2, CCDC101 and DR1. Interacts via (ZZ-type zinc finger) with histone H3 in a methylation-independent manner and acetylation on 'Lys-4' (H3K4ac) moderately enhances the interaction.

It is found in the nucleus. Functionally, histone H3 reader that is required for the ATAC complex-mediated maintenance of histone acetylation and gene activation. Component of the ATAC complex, a complex with histone acetyltransferase activity on histones H3 and H4. The chain is ZZ-type zinc finger-containing protein 3 (Zzz3) from Mus musculus (Mouse).